A 192-amino-acid polypeptide reads, in one-letter code: Pyridoxal 5'-phosphate synthase subunit PdxT (192 aa).

50–52 contacts L-glutamine; sequence GES. Cys82 acts as the Nucleophile in catalysis. Residues Arg109 and 136–137 contribute to the L-glutamine site; that span reads IR. Active-site charge relay system residues include His172 and Glu174.

Belongs to the glutaminase PdxT/SNO family. In terms of assembly, in the presence of PdxS, forms a dodecamer of heterodimers. Only shows activity in the heterodimer.

It catalyses the reaction aldehydo-D-ribose 5-phosphate + D-glyceraldehyde 3-phosphate + L-glutamine = pyridoxal 5'-phosphate + L-glutamate + phosphate + 3 H2O + H(+). The enzyme catalyses L-glutamine + H2O = L-glutamate + NH4(+). It functions in the pathway cofactor biosynthesis; pyridoxal 5'-phosphate biosynthesis. Its function is as follows. Catalyzes the hydrolysis of glutamine to glutamate and ammonia as part of the biosynthesis of pyridoxal 5'-phosphate. The resulting ammonia molecule is channeled to the active site of PdxS. The protein is Pyridoxal 5'-phosphate synthase subunit PdxT of Haemophilus influenzae (strain PittEE).